The chain runs to 384 residues: Mannitol-1-phosphate 5-dehydrogenase (384 aa).

3 to 14 serves as a coordination point for NAD(+); the sequence is AVHFGAGNIGRG.

It belongs to the mannitol dehydrogenase family. In terms of assembly, monomer.

It catalyses the reaction D-mannitol 1-phosphate + NAD(+) = beta-D-fructose 6-phosphate + NADH + H(+). The sequence is that of Mannitol-1-phosphate 5-dehydrogenase (mtlD) from Enterococcus faecalis (strain ATCC 700802 / V583).